Consider the following 690-residue polypeptide: uncharacterized protein (690 aa).

This is an uncharacterized protein from Acanthamoeba polyphaga (Amoeba).